Reading from the N-terminus, the 387-residue chain is 3-ketoacyl-CoA thiolase (387 aa).

C91 functions as the Acyl-thioester intermediate in the catalytic mechanism. Residues H343 and C373 each act as proton acceptor in the active site.

The protein belongs to the thiolase-like superfamily. Thiolase family. In terms of assembly, heterotetramer of two alpha chains (FadB) and two beta chains (FadA).

It localises to the cytoplasm. The enzyme catalyses an acyl-CoA + acetyl-CoA = a 3-oxoacyl-CoA + CoA. It functions in the pathway lipid metabolism; fatty acid beta-oxidation. Functionally, catalyzes the final step of fatty acid oxidation in which acetyl-CoA is released and the CoA ester of a fatty acid two carbons shorter is formed. The chain is 3-ketoacyl-CoA thiolase from Escherichia coli O139:H28 (strain E24377A / ETEC).